The following is a 497-amino-acid chain: MLLDAGPQFPALGVGTFARHHHHHHHHHAAVAAAAAAAAEMQERELSLAQNSFVEPTHMGAFKMNPGGGSGGGSGGGGGAGPNGGAGASGPHDLSPPGQTSAFTSQAGYPASALAPHSAYTGAAAFNSPRDFLFRGRGFAEGSAAAGGGQHGLFGPPAGSLHHHPHHHHQLSHGEHPQGHLLFPGIHDQHAAASQNTLGGQMRLGLPGEVFGRTDQYRQVSSPRGDPYTAAQLHNQYSPMNMGMNMAAHHHHHHHHPGAFFRYMRQQCIKQELICKWIDPEQLNNPKKSCNKTFSTMHELVTHMSVEHVGGPEQSNHICFWEECAREGKPFKAKYKLVNHIRVHTGEKPFPCPFPGCGKVFARSENLKIHKRTHTGEKPFQCEFEGCDRRFANSSDRKKHMHVHTSDKPYLCKMCDKSYTHPSSLRKHMKVHESSPQGSESSPAASSGYESSTPPGLVSPNSETQNPNLSPAAVSAVHSVSSGASGTLASNFNEWYV.

Disordered regions lie at residues 58–107 and 143–180; these read HMGA…TSQA and SAAA…PQGH. Residues 66–88 show a composition bias toward gly residues; that stretch reads PGGGSGGGSGGGGGAGPNGGAGA. Polar residues predominate over residues 97–107; that stretch reads PGQTSAFTSQA. Positions 161 to 171 are enriched in basic residues; it reads LHHHPHHHHQL. The C2H2-type 1; atypical zinc-finger motif lies at 273-308; that stretch reads LICKWIDPEQLNNPKKSCNKTFSTMHELVTHMSVEH. The segment at 317–344 adopts a C2H2-type 2; atypical zinc-finger fold; sequence HICFWEECAREGKPFKAKYKLVNHIRVH. 3 consecutive C2H2-type zinc fingers follow at residues 350-374, 380-404, and 410-432; these read FPCP…KRTH, FQCE…MHVH, and YLCK…MKVH. The segment at 423 to 473 is disordered; sequence SSLRKHMKVHESSPQGSESSPAASSGYESSTPPGLVSPNSETQNPNLSPAA. The span at 434–452 shows a compositional bias: low complexity; the sequence is SSPQGSESSPAASSGYESS. A compositionally biased stretch (polar residues) spans 459–469; that stretch reads SPNSETQNPNL.

It belongs to the GLI C2H2-type zinc-finger protein family.

Its subcellular location is the nucleus. The protein resides in the cytoplasm. In terms of biological role, transcriptional repressor that inhibits neurogenesis and induces neural and neural crest differentiation. Regulates anteroposterior patterning in early development by inhibiting expression of the nodal genes through the inhibition of vegt. Required for gastrulation movements and for proper anterior neural and axial development. May also act as a transcriptional activator. May bind to the minimal GLI-consensus sequence 5'-TGGGTGGTC-3'. The chain is Zinc finger protein ZIC 2-B (zic2-b) from Xenopus laevis (African clawed frog).